The sequence spans 214 residues: Germin-like protein 9-3 (214 aa).

The signal sequence occupies residues 1-23; that stretch reads MASSILLLVVLAVVSAPVALVMA. N-linked (GlcNAc...) asparagine glycosylation is found at Asn-42, Asn-60, and Asn-69. Positions 59–202 constitute a Cupin type-1 domain; it reads MNMSMPMPNA…SFKTDVPTIQ (144 aa). Positions 104, 106, 111, and 150 each coordinate Mn(2+).

It belongs to the germin family. In terms of assembly, oligomer (believed to be a pentamer but probably hexamer).

The protein localises to the secreted. It is found in the extracellular space. The protein resides in the apoplast. May play a role in plant defense. Probably has no oxalate oxidase activity even if the active site is conserved. This Oryza sativa subsp. japonica (Rice) protein is Germin-like protein 9-3.